The following is an 81-amino-acid chain: Photosystem I iron-sulfur center (81 aa).

2 4Fe-4S ferredoxin-type domains span residues 2-31 (SHSV…MIPW) and 39-68 (IASA…VRVY). Positions 11, 14, 17, 21, 48, 51, 54, and 58 each coordinate [4Fe-4S] cluster.

The eukaryotic PSI reaction center is composed of at least 11 subunits. It depends on [4Fe-4S] cluster as a cofactor.

The protein localises to the plastid. It is found in the chloroplast thylakoid membrane. The catalysed reaction is reduced [plastocyanin] + hnu + oxidized [2Fe-2S]-[ferredoxin] = oxidized [plastocyanin] + reduced [2Fe-2S]-[ferredoxin]. Apoprotein for the two 4Fe-4S centers FA and FB of photosystem I (PSI); essential for photochemical activity. FB is the terminal electron acceptor of PSI, donating electrons to ferredoxin. The C-terminus interacts with PsaA/B/D and helps assemble the protein into the PSI complex. Required for binding of PsaD and PsaE to PSI. PSI is a plastocyanin-ferredoxin oxidoreductase, converting photonic excitation into a charge separation, which transfers an electron from the donor P700 chlorophyll pair to the spectroscopically characterized acceptors A0, A1, FX, FA and FB in turn. The chain is Photosystem I iron-sulfur center from Phaseolus vulgaris (Kidney bean).